The sequence spans 141 residues: MRQRTIVCPLIQNDGAYLLCKMADDRGVFPGQWAISGGGVEPGERIEEALRREIREELGEQLLLTEITPWTFSDDIRTKTYADGRKEEIYMIYLIFDCVSANREVKINEEFQDYAWVKPEDLVHYDLNVATRKTLRLKGLL.

The region spanning 1 to 141 is the Nudix hydrolase domain; it reads MRQRTIVCPL…RKTLRLKGLL (141 aa). The Nudix box motif lies at 38-59; the sequence is GGVEPGERIEEALRREIREELG.

It belongs to the Nudix hydrolase family. NudI subfamily. As to quaternary structure, monomer. Mg(2+) serves as cofactor.

It catalyses the reaction a ribonucleoside 5'-triphosphate + H2O = a ribonucleoside 5'-phosphate + diphosphate + H(+). The enzyme catalyses a 2'-deoxyribonucleoside 5'-triphosphate + H2O = a 2'-deoxyribonucleoside 5'-phosphate + diphosphate + H(+). It carries out the reaction dUTP + H2O = dUMP + diphosphate + H(+). The catalysed reaction is dTTP + H2O = dTMP + diphosphate + H(+). It catalyses the reaction dCTP + H2O = dCMP + diphosphate + H(+). Functionally, catalyzes the hydrolysis of nucleoside triphosphates, with a preference for pyrimidine deoxynucleoside triphosphates (dUTP, dTTP and dCTP). The chain is Nucleoside triphosphatase NudI from Escherichia coli (strain ATCC 8739 / DSM 1576 / NBRC 3972 / NCIMB 8545 / WDCM 00012 / Crooks).